We begin with the raw amino-acid sequence, 559 residues long: Tryprostatin B 6-hydroxylase (559 aa).

Helical transmembrane passes span 13–35 (PSVM…HLSY), 48–65 (YVRF…LLYA), and 82–104 (VSLL…RTLF). Residue Cys502 participates in heme binding.

This sequence belongs to the cytochrome P450 family. It depends on heme as a cofactor.

It localises to the membrane. It catalyses the reaction tryprostatin B + reduced [NADPH--hemoprotein reductase] + O2 = 6-hydroxytryprostatin B + oxidized [NADPH--hemoprotein reductase] + H2O + H(+). The protein operates within mycotoxin biosynthesis. Functionally, cytochrome P450 monooxygenase; part of the gene cluster that mediates the biosynthesis of fumitremorgins, indole alkaloids that carry not only intriguing chemical structures, but also interesting biological and pharmacological activities. The biosynthesis of fumitremorgin-type alkaloids begins by condensation of the two amino acids L-tryptophan and L-proline to brevianamide F, catalyzed by the non-ribosomal peptide synthetase ftmA. Brevianamide F is then prenylated by the prenyltransferase ftmPT1/ftmB in the presence of dimethylallyl diphosphate, resulting in the formation of tryprostatin B. The three cytochrome P450 monooxygenases, ftmP450-1/ftmC, ftmP450-2/ftmE and ftmP450-3/FtmG, are responsible for the conversion of tryprostatin B to 6-hydroxytryprostatin B, tryprostatin A to fumitremorgin C and fumitremorgin C to 12,13-dihydroxyfumitremorgin C, respectively. The putative methyltransferase ftmMT/ftmD is expected for the conversion of 6-hydroxytryprostatin B to tryprostatin A. FtmPT2/FtmH catalyzes the prenylation of 12,13-dihydroxyfumitre-morgin C in the presence of dimethylallyl diphosphate, resulting in the formation of fumitremorgin B. Fumitremorgin B is further converted to verruculogen by ftmOx1/ftmF via the insertion of an endoperoxide bond between the two prenyl moieties. In some fungal species, verruculogen is further converted to fumitremorgin A, but the enzymes involved in this step have not been identified yet. This Aspergillus fumigatus (Neosartorya fumigata) protein is Tryprostatin B 6-hydroxylase.